The primary structure comprises 83 residues: Mu-theraphotoxin-Hhn2j 4 (83 aa).

A signal peptide spans 1–21 (MKASMFLALAGLVLLFVVGYA). Positions 22–48 (SESEEKEFPIELLSKIFAVDVFKGEGR) are excised as a propeptide. Cystine bridges form between Cys50-Cys65, Cys57-Cys70, and Cys64-Cys77. Leu81 is subject to Leucine amide.

The protein belongs to the neurotoxin 10 (Hwtx-1) family. 15 (Hntx-3) subfamily. As to quaternary structure, monomer. Expressed by the venom gland.

The protein localises to the secreted. Its function is as follows. Lethal neurotoxin. Selectively blocks tetrodotoxin-sensitive voltage-gated sodium channels (Nav). Does not affect tetrodotoxin-resistant voltage-gated sodium channels or calcium channels. The polypeptide is Mu-theraphotoxin-Hhn2j 4 (Cyriopagopus hainanus (Chinese bird spider)).